The chain runs to 352 residues: Photosystem II protein D1 (352 aa).

Thr2 carries the N-acetylthreonine modification. Position 2 is a phosphothreonine (Thr2). The next 3 membrane-spanning stretches (helical) occupy residues 29–46 (YIGW…TATS), 118–133 (HFFL…EWEL), and 142–156 (WIAV…AATA). His118 provides a ligand contact to chlorophyll a. Tyr126 contacts pheophytin a. Residues Asp170 and Glu189 each coordinate [CaMn4O5] cluster. A helical membrane pass occupies residues 197–218 (FHMLGVAGVFGGSLFSAMHGSL). His198 contacts chlorophyll a. A quinone-binding positions include His215 and 264–265 (SF). His215 provides a ligand contact to Fe cation. Position 272 (His272) interacts with Fe cation. Residues 274-288 (FLAAWPVVGIWFTAL) traverse the membrane as a helical segment. Residues His332, Glu333, Asp342, and Ala344 each contribute to the [CaMn4O5] cluster site. The propeptide occupies 345-352 (SVEAPSIA).

Belongs to the reaction center PufL/M/PsbA/D family. In terms of assembly, PSII is composed of 1 copy each of membrane proteins PsbA, PsbB, PsbC, PsbD, PsbE, PsbF, PsbH, PsbI, PsbJ, PsbK, PsbL, PsbM, PsbT, PsbX, PsbY, PsbZ, Psb30/Ycf12, at least 3 peripheral proteins of the oxygen-evolving complex and a large number of cofactors. It forms dimeric complexes. It depends on The D1/D2 heterodimer binds P680, chlorophylls that are the primary electron donor of PSII, and subsequent electron acceptors. It shares a non-heme iron and each subunit binds pheophytin, quinone, additional chlorophylls, carotenoids and lipids. D1 provides most of the ligands for the Mn4-Ca-O5 cluster of the oxygen-evolving complex (OEC). There is also a Cl(-1) ion associated with D1 and D2, which is required for oxygen evolution. The PSII complex binds additional chlorophylls, carotenoids and specific lipids. as a cofactor. In terms of processing, tyr-161 forms a radical intermediate that is referred to as redox-active TyrZ, YZ or Y-Z. C-terminally processed by CTPA; processing is essential to allow assembly of the oxygen-evolving complex and thus photosynthetic growth.

The protein localises to the plastid. It localises to the chloroplast thylakoid membrane. It carries out the reaction 2 a plastoquinone + 4 hnu + 2 H2O = 2 a plastoquinol + O2. Its function is as follows. Photosystem II (PSII) is a light-driven water:plastoquinone oxidoreductase that uses light energy to abstract electrons from H(2)O, generating O(2) and a proton gradient subsequently used for ATP formation. It consists of a core antenna complex that captures photons, and an electron transfer chain that converts photonic excitation into a charge separation. The D1/D2 (PsbA/PsbD) reaction center heterodimer binds P680, the primary electron donor of PSII as well as several subsequent electron acceptors. The protein is Photosystem II protein D1 of Chlorella ellipsoidea.